We begin with the raw amino-acid sequence, 282 residues long: Bis(5'-nucleosyl)-tetraphosphatase, symmetrical (282 aa).

This sequence belongs to the Ap4A hydrolase family.

It catalyses the reaction P(1),P(4)-bis(5'-adenosyl) tetraphosphate + H2O = 2 ADP + 2 H(+). Hydrolyzes diadenosine 5',5'''-P1,P4-tetraphosphate to yield ADP. The polypeptide is Bis(5'-nucleosyl)-tetraphosphatase, symmetrical (Klebsiella pneumoniae subsp. pneumoniae (strain ATCC 700721 / MGH 78578)).